Here is a 348-residue protein sequence, read N- to C-terminus: Nicotinate-nucleotide--dimethylbenzimidazole phosphoribosyltransferase (348 aa).

Catalysis depends on E316, which acts as the Proton acceptor.

It belongs to the CobT family.

It catalyses the reaction 5,6-dimethylbenzimidazole + nicotinate beta-D-ribonucleotide = alpha-ribazole 5'-phosphate + nicotinate + H(+). The protein operates within nucleoside biosynthesis; alpha-ribazole biosynthesis; alpha-ribazole from 5,6-dimethylbenzimidazole: step 1/2. Its function is as follows. Catalyzes the synthesis of alpha-ribazole-5'-phosphate from nicotinate mononucleotide (NAMN) and 5,6-dimethylbenzimidazole (DMB). This is Nicotinate-nucleotide--dimethylbenzimidazole phosphoribosyltransferase from Xanthomonas campestris pv. campestris (strain 8004).